Consider the following 284-residue polypeptide: D-tagatose-1,6-bisphosphate aldolase subunit GatY (284 aa).

Residue Asp82 is the Proton donor of the active site. Zn(2+) is bound by residues His83 and His180. Position 181 (Gly181) interacts with dihydroxyacetone phosphate. His208 contributes to the Zn(2+) binding site. Dihydroxyacetone phosphate-binding positions include 209–211 (GAS) and 230–233 (NVAT).

This sequence belongs to the class II fructose-bisphosphate aldolase family. TagBP aldolase GatY subfamily. Forms a complex with GatZ. Zn(2+) serves as cofactor.

It carries out the reaction D-tagatofuranose 1,6-bisphosphate = D-glyceraldehyde 3-phosphate + dihydroxyacetone phosphate. It functions in the pathway carbohydrate metabolism; D-tagatose 6-phosphate degradation; D-glyceraldehyde 3-phosphate and glycerone phosphate from D-tagatose 6-phosphate: step 2/2. In terms of biological role, catalytic subunit of the tagatose-1,6-bisphosphate aldolase GatYZ, which catalyzes the reversible aldol condensation of dihydroxyacetone phosphate (DHAP or glycerone-phosphate) with glyceraldehyde 3-phosphate (G3P) to produce tagatose 1,6-bisphosphate (TBP). Requires GatZ subunit for full activity and stability. Is involved in the catabolism of galactitol. The chain is D-tagatose-1,6-bisphosphate aldolase subunit GatY from Salmonella typhi.